Reading from the N-terminus, the 468-residue chain is Protein wingless (468 aa).

The N-terminal stretch at 1 to 17 (MDISYIFVICLMALCSG) is a signal peptide. The binds porcupine stretch occupies residues 83–106 (VKGANLAISECQHQFRNRRWNCST). A disulfide bridge connects residues cysteine 93 and cysteine 104. N-linked (GlcNAc...) asparagine glycosylation is found at asparagine 103 and asparagine 108. 4 disulfide bridges follow: cysteine 146–cysteine 154, cysteine 156–cysteine 185, cysteine 233–cysteine 247, and cysteine 235–cysteine 242. Serine 239 is lipidated: O-palmitoleoyl serine; by PORCN. The interval 333-362 (ISKIHHPNMPSPNSLPQAGQRGGRNGRRQG) is disordered. 6 cysteine pairs are disulfide-bonded: cysteine 397–cysteine 428, cysteine 413–cysteine 423, cysteine 427–cysteine 467, cysteine 443–cysteine 458, cysteine 445–cysteine 455, and cysteine 450–cysteine 451. Residue asparagine 414 is glycosylated (N-linked (GlcNAc...) asparagine).

This sequence belongs to the Wnt family. Monomer; folds by intramolecular disulfide bonds. Interacts with porcupine (por). Interacts with wls; in the Golgi. Interacts with en. Interacts with the proteoglycan Cow (heparan sulfate-bound form); this stabilizes wg and promotes its extracellular distribution. Interacts with peg; the interaction facilitates short-range diffusion of wg. In terms of processing, palmitoleoylated by porcupine. The lipid group functions as a sorting signal, targeting the ligand to polarized vesicles that transport wg to unique sites at the cell surface. Depalmitoleoylated by notum, leading to inhibit Wnt signaling pathway. Post-translationally, major form is glycosylated at 2 sites, glycosylation is stimulated by porcupine at the ER. Segmented expression in embryos. In embryonic tracheal cells, expression is in stripes flanking the tracheal placode.

The protein resides in the secreted. Its subcellular location is the synapse. It is found in the membrane. The protein localises to the extracellular space. It localises to the extracellular matrix. Binds as a ligand to a family of frizzled seven-transmembrane receptors and acts through a cascade of genes on the nucleus. Segment polarity protein. May be a growth factor. Acts on neighboring cells to regulate at least one gene, the homeobox segmentation gene engrailed. Wg signal represses arm phosphorylation. Wg signaling operates by inactivating the sgg repression of engrailed autoactivation. Wg and Wnt2 have a role in the developing trachea and together are responsible for all dorsal trunk formation. Wg also acts in the developing epidermis. Acts as a morphogen, and diffuses long distances despite its lipidation. Lipophorin is required for diffusion, probably by acting as vehicle for its movement, explaining how it can spread over long distances despite its lipidation. In non-neuronal cells, wls directs wg secretion via clathrin-mediated endocytosis and the retromer complex (a conserved protein complex consisting of Vps26 and Vps35) to sustain a wls traffic loop encompassing the Golgi, the cell surface, an endocytic compartment and a retrograde route leading back to the Golgi. In neuronal cells (the larval motorneuron NMJ), wg signal moves across the synapse through the release of wls-containing exosome-like vesicles. The sequence is that of Protein wingless (wg) from Drosophila melanogaster (Fruit fly).